The primary structure comprises 515 residues: Glucose-6-phosphate 1-dehydrogenase (515 aa).

NADP(+) is bound by residues Arg53 and Lys160. Substrate is bound by residues His190, Lys194, Glu228, and Asp247. The active-site Proton acceptor is the His252. Residue Lys352 coordinates substrate.

The protein belongs to the glucose-6-phosphate dehydrogenase family.

The catalysed reaction is D-glucose 6-phosphate + NADP(+) = 6-phospho-D-glucono-1,5-lactone + NADPH + H(+). It participates in carbohydrate degradation; pentose phosphate pathway; D-ribulose 5-phosphate from D-glucose 6-phosphate (oxidative stage): step 1/3. Functionally, catalyzes the oxidation of glucose 6-phosphate to 6-phosphogluconolactone. The sequence is that of Glucose-6-phosphate 1-dehydrogenase from Treponema pallidum (strain Nichols).